Reading from the N-terminus, the 129-residue chain is Serum amyloid A-2 protein (129 aa).

The signal sequence occupies residues 1-18; that stretch reads MKLFTGLIFCSLVLGVHS. Residue Gln19 is modified to Pyrrolidone carboxylic acid. Over residues 90 to 103 the composition is skewed to basic and acidic residues; it reads KHGDSGHGVEDSRA. The segment at 90-129 is disordered; sequence KHGDSGHGVEDSRADQAANEWGRSGKDPNHFRPPGLPDKY.

It belongs to the SAA family. Apolipoprotein of the HDL complex.

It localises to the secreted. Major acute phase reactant. This chain is Serum amyloid A-2 protein, found in Sus scrofa (Pig).